Here is a 391-residue protein sequence, read N- to C-terminus: 4-hydroxy-3-methylbut-2-en-1-yl diphosphate synthase (flavodoxin) (391 aa).

C286, C289, C321, and E328 together coordinate [4Fe-4S] cluster.

This sequence belongs to the IspG family. It depends on [4Fe-4S] cluster as a cofactor.

It catalyses the reaction (2E)-4-hydroxy-3-methylbut-2-enyl diphosphate + oxidized [flavodoxin] + H2O + 2 H(+) = 2-C-methyl-D-erythritol 2,4-cyclic diphosphate + reduced [flavodoxin]. It participates in isoprenoid biosynthesis; isopentenyl diphosphate biosynthesis via DXP pathway; isopentenyl diphosphate from 1-deoxy-D-xylulose 5-phosphate: step 5/6. Functionally, converts 2C-methyl-D-erythritol 2,4-cyclodiphosphate (ME-2,4cPP) into 1-hydroxy-2-methyl-2-(E)-butenyl 4-diphosphate. This chain is 4-hydroxy-3-methylbut-2-en-1-yl diphosphate synthase (flavodoxin), found in Corynebacterium diphtheriae (strain ATCC 700971 / NCTC 13129 / Biotype gravis).